The sequence spans 44 residues: Photosystem I reaction center subunit IX (44 aa).

Residues 7-27 (YLSVAPVLSTLWFGALAGLLI) traverse the membrane as a helical segment.

It belongs to the PsaJ family.

It localises to the plastid. It is found in the chloroplast thylakoid membrane. Functionally, may help in the organization of the PsaE and PsaF subunits. The protein is Photosystem I reaction center subunit IX of Eucalyptus globulus subsp. globulus (Tasmanian blue gum).